The primary structure comprises 74 residues: MKFQYLLAIFMIVLVVTDHCQAFIGMIPGLIGGLISAIKGRRRRQLEARYEPQQRNFRKREIDFEKLFANMPDY.

Positions 1 to 22 are cleaved as a signal peptide; that stretch reads MKFQYLLAIFMIVLVVTDHCQA. Position 39 is a lysine amide; partial (Lys39). Positions 40–74 are excised as a propeptide; sequence GRRRRQLEARYEPQQRNFRKREIDFEKLFANMPDY.

The protein belongs to the non-disulfide-bridged peptide (NDBP) superfamily. Short antimicrobial peptide (group 4) family. In terms of tissue distribution, expressed by the venom gland.

The protein resides in the secreted. It is found in the target cell membrane. Its function is as follows. Antimicrobial peptide that probably forms pores in target membranes. Has antibacterial activity against Gram-positive bacteria S.aureus NBRC 13276 (MIC=5-10 uM) and B.subtilis NBRC 3009 (MIC=2.5-5 uM) but not against Gram-negative bacterium E.coli NBRC 3972. The chain is Peptide Im-4 from Isometrus maculatus (Lesser brown scorpion).